Consider the following 377-residue polypeptide: Chaperone protein DnaJ (377 aa).

The J domain occupies 5 to 70 (DYYQVLGVSR…KKRSAYDQLG (66 aa)). The CR-type zinc-finger motif lies at 138–216 (GVTKIISFKT…CYGEGRYINT (79 aa)). Residues C151, C154, C168, C171, C190, C193, C204, and C207 each coordinate Zn(2+). CXXCXGXG motif repeat units follow at residues 151–158 (CDACAGKG), 168–175 (CPTCRGSG), 190–197 (CQTCRGAG), and 204–211 (CTKCYGEG).

The protein belongs to the DnaJ family. Homodimer. Requires Zn(2+) as cofactor.

The protein localises to the cytoplasm. Its function is as follows. Participates actively in the response to hyperosmotic and heat shock by preventing the aggregation of stress-denatured proteins and by disaggregating proteins, also in an autonomous, DnaK-independent fashion. Unfolded proteins bind initially to DnaJ; upon interaction with the DnaJ-bound protein, DnaK hydrolyzes its bound ATP, resulting in the formation of a stable complex. GrpE releases ADP from DnaK; ATP binding to DnaK triggers the release of the substrate protein, thus completing the reaction cycle. Several rounds of ATP-dependent interactions between DnaJ, DnaK and GrpE are required for fully efficient folding. Also involved, together with DnaK and GrpE, in the DNA replication of plasmids through activation of initiation proteins. This is Chaperone protein DnaJ from Orientia tsutsugamushi (strain Boryong) (Rickettsia tsutsugamushi).